A 367-amino-acid chain; its full sequence is C-X-C chemokine receptor type 3 (367 aa).

Over 1-56 (MYLEVSERQVLDASDIAFLLENSTSPYDYGENESDFSDSPPCPQDFSLNFDRTFLP) the chain is Extracellular. Residue Asn-22 is glycosylated (N-linked (GlcNAc...) asparagine). 2 positions are modified to sulfotyrosine: Tyr-27 and Tyr-29. An N-linked (GlcNAc...) asparagine glycan is attached at Asn-32. The helical transmembrane segment at 57–77 (VLYSLLFLLGLLGNGAVAAVL) threads the bilayer. Over 78 to 89 (LSQRTALSSTDT) the chain is Cytoplasmic. A helical membrane pass occupies residues 90–110 (FLLHLAVADVLLVLTLPLWAV). At 111–125 (DAAAQWVFGSGLCKV) the chain is on the extracellular side. Cys-123 and Cys-202 form a disulfide bridge. Residues 126-146 (AGALFNINFYAGAFLLACISF) traverse the membrane as a helical segment. Residues 147 to 168 (DRYLSIVHATQIYRRDPWVRVA) are Cytoplasmic-facing. The chain crosses the membrane as a helical span at residues 169–189 (LTCIVVWGLCVLFALPDFIFL). At 190-222 (SASHDQRLNATHCQYNFPQVGRTALRVLQLVAG) the chain is on the extracellular side. Asn-198 carries N-linked (GlcNAc...) asparagine glycosylation. A helical transmembrane segment spans residues 223 to 243 (FLMPLLVMAYCYAHILAVLLV). Residues 244–255 (SRGQRRFRAMRL) are Cytoplasmic-facing. A helical transmembrane segment spans residues 256-276 (VVVVVVAFAVCWTPYHLVVLV). The Extracellular segment spans residues 277–300 (DILMDVGVLARNCGRESHVDVAKS). The chain crosses the membrane as a helical span at residues 301-321 (VTSGMGYMHCCLNPLLYAFVG). Topologically, residues 322 to 367 (VKFKEQMWMLLMRLGRSDQRGPQRQPSSSRRESSWSETTEASYLGL) are cytoplasmic. Positions 339–367 (DQRGPQRQPSSSRRESSWSETTEASYLGL) are disordered.

It belongs to the G-protein coupled receptor 1 family. In terms of assembly, homomer. Forms heteromers with ACKR4. Interacts with PF4/CXCL4. In terms of processing, sulfation on Tyr-27 and Tyr-29 is essential for CXCL10 binding. Post-translationally, N-glycosylated.

It localises to the cell membrane. Its function is as follows. Receptor for the C-X-C chemokine CXCL9, CXCL10 and CXCL11 and mediates the proliferation, survival and angiogenic activity of mesangial cells through a heterotrimeric G-protein signaling pathway. Probably promotes cell chemotaxis response. Binds to CCL21. Upon activation by PF4, induces activated T-lymphocytes migration mediated via downstream Ras/extracellular signal-regulated kinase (ERK) signaling. The chain is C-X-C chemokine receptor type 3 (Cxcr3) from Rattus norvegicus (Rat).